Reading from the N-terminus, the 147-residue chain is Large ribosomal subunit protein uL13 (147 aa).

This sequence belongs to the universal ribosomal protein uL13 family. Part of the 50S ribosomal subunit.

In terms of biological role, this protein is one of the early assembly proteins of the 50S ribosomal subunit, although it is not seen to bind rRNA by itself. It is important during the early stages of 50S assembly. The chain is Large ribosomal subunit protein uL13 from Kineococcus radiotolerans (strain ATCC BAA-149 / DSM 14245 / SRS30216).